A 776-amino-acid polypeptide reads, in one-letter code: Disintegrin and metalloproteinase domain-containing protein 28 (776 aa).

Positions 1-19 (MLQALLTVSLLLSPVPVSA) are cleaved as a signal peptide. Positions 20–193 (IKELPGVKKY…IARPATRLVK (174 aa)) are excised as a propeptide. The short motif at 168–175 (STCGTDGV) is the Cysteine switch element. Zn(2+) is bound at residue C170. At 194–666 (LNDGKVQKHE…CDDSSVVFYF (473 aa)) the chain is on the extracellular side. Residues 204 to 400 (KYIEYYLVLD…KLSNCLFNAP (197 aa)) enclose the Peptidase M12B domain. 2 N-linked (GlcNAc...) asparagine glycosylation sites follow: N268 and N275. Intrachain disulfides connect C315/C395, C355/C379, C357/C362, and C466/C486. H340 serves as a coordination point for Zn(2+). The active site involves E341. Zn(2+) is bound by residues H344 and H350. N352 carries an N-linked (GlcNAc...) asparagine glycan. The region spanning 408-494 (TPICGNQMVE…NCPDDRFRAN (87 aa)) is the Disintegrin domain. N-linked (GlcNAc...) asparagine glycosylation is found at N558, N603, and N629. An EGF-like domain is found at 626-658 (KSTNCSSKCKGHAVCDHELQCQCEEGWSPPDCD). 3 cysteine pairs are disulfide-bonded: C630–C640, C634–C646, and C648–C657. A helical transmembrane segment spans residues 667–687 (SIVVAVLFPVAVISLVVAIVI). The Cytoplasmic segment spans residues 688-776 (RQQSSREKQK…SSFLDSNPKA (89 aa)). Residues 691 to 701 (SSREKQKKDQR) show a composition bias toward basic and acidic residues. Disordered stretches follow at residues 691–728 (SSREKQKKDQRPLSTTGTRPHKQKRKPQMVKAVQPQEM) and 746–776 (PASFLISKPDFSPPPIPAPRSSSFLDSNPKA). Basic residues predominate over residues 709–718 (RPHKQKRKPQ).

The cofactor is Zn(2+). Post-translationally, pro-domain removal and maturation may be, at least in part, autocatalytic. In terms of tissue distribution, expressed at high levels in epididymis and at lower levels in lung.

It is found in the membrane. May play a role in the adhesive and proteolytic events that occur during lymphocyte emigration or may function in ectodomain shedding of lymphocyte surface target proteins, such as FASL and CD40L. May be involved in sperm maturation. In Macaca fascicularis (Crab-eating macaque), this protein is Disintegrin and metalloproteinase domain-containing protein 28 (ADAM28).